Here is a 337-residue protein sequence, read N- to C-terminus: Nicotinate-nucleotide--dimethylbenzimidazole phosphoribosyltransferase (337 aa).

E305 serves as the catalytic Proton acceptor.

This sequence belongs to the CobT family.

It carries out the reaction 5,6-dimethylbenzimidazole + nicotinate beta-D-ribonucleotide = alpha-ribazole 5'-phosphate + nicotinate + H(+). It participates in nucleoside biosynthesis; alpha-ribazole biosynthesis; alpha-ribazole from 5,6-dimethylbenzimidazole: step 1/2. Catalyzes the synthesis of alpha-ribazole-5'-phosphate from nicotinate mononucleotide (NAMN) and 5,6-dimethylbenzimidazole (DMB). The protein is Nicotinate-nucleotide--dimethylbenzimidazole phosphoribosyltransferase of Jannaschia sp. (strain CCS1).